Here is a 70-residue protein sequence, read N- to C-terminus: Large ribosomal subunit protein uL29 (70 aa).

This sequence belongs to the universal ribosomal protein uL29 family.

The sequence is that of Large ribosomal subunit protein uL29 from Prochlorococcus marinus (strain MIT 9313).